We begin with the raw amino-acid sequence, 518 residues long: Glutamate--cysteine ligase (518 aa).

Belongs to the glutamate--cysteine ligase type 1 family. Type 1 subfamily.

The enzyme catalyses L-cysteine + L-glutamate + ATP = gamma-L-glutamyl-L-cysteine + ADP + phosphate + H(+). It participates in sulfur metabolism; glutathione biosynthesis; glutathione from L-cysteine and L-glutamate: step 1/2. This Escherichia coli O7:K1 (strain IAI39 / ExPEC) protein is Glutamate--cysteine ligase.